The primary structure comprises 336 residues: ATP-dependent 6-phosphofructokinase (336 aa).

Gly11 serves as a coordination point for ATP. Arg21 to Arg25 lines the ADP pocket. Residues Arg72–Tyr73 and Gly102–Ser105 contribute to the ATP site. Asp103 contacts Mg(2+). Residue Thr125–Asp127 participates in substrate binding. The active-site Proton acceptor is the Asp127. Arg154 lines the ADP pocket. Substrate contacts are provided by residues Arg162 and Met169 to Arg171. Residues Gly185–Asp187, Lys211, and Lys213–His215 contribute to the ADP site. Substrate is bound by residues Glu222, Arg244, and His250–Arg253.

This sequence belongs to the phosphofructokinase type A (PFKA) family. ATP-dependent PFK group I subfamily. Prokaryotic clade 'B1' sub-subfamily. In terms of assembly, homotetramer. The cofactor is Mg(2+).

Its subcellular location is the cytoplasm. The enzyme catalyses beta-D-fructose 6-phosphate + ATP = beta-D-fructose 1,6-bisphosphate + ADP + H(+). It participates in carbohydrate degradation; glycolysis; D-glyceraldehyde 3-phosphate and glycerone phosphate from D-glucose: step 3/4. With respect to regulation, allosterically activated by ADP and other diphosphonucleosides, and allosterically inhibited by phosphoenolpyruvate. In terms of biological role, catalyzes the phosphorylation of D-fructose 6-phosphate to fructose 1,6-bisphosphate by ATP, the first committing step of glycolysis. In Streptococcus suis (strain 05ZYH33), this protein is ATP-dependent 6-phosphofructokinase.